Here is a 139-residue protein sequence, read N- to C-terminus: 10 kDa chaperonin 2, chloroplastic (139 aa).

A chloroplast-targeting transit peptide spans 1–39 (MASTFVCSLPNPFFAFPVKATTPSTANHTLLGSRRGCLR). Positions 51–138 (KVVPQADRVL…CKESDLLALV (88 aa)) are cpn-10 domain.

This sequence belongs to the GroES chaperonin family. As to expression, expressed in leaves and stems. Expressed at low levels in germinating seeds, seedlings, rosettes leaves, flowers and siliques.

The protein localises to the plastid. Its subcellular location is the chloroplast stroma. In terms of biological role, functions as a co-chaperone for protein folding in chloroplasts. This chain is 10 kDa chaperonin 2, chloroplastic, found in Arabidopsis thaliana (Mouse-ear cress).